The chain runs to 1914 residues: Zinc finger protein Rlf (1914 aa).

Ser-41 is modified (phosphoserine). Positions 521–540 are enriched in basic and acidic residues; the sequence is KQYRRRDLTDQHKEKRDKKP. Positions 521–541 are disordered; that stretch reads KQYRRRDLTDQHKEKRDKKPI. The segment at 582–604 adopts a C2H2-type 1 zinc-finger fold; the sequence is YTCPVCIKKFKRKEMFVPHVMEH. Residue Lys-622 forms a Glycyl lysine isopeptide (Lys-Gly) (interchain with G-Cter in SUMO2) linkage. 2 positions are modified to phosphoserine: Ser-632 and Ser-634. 5 consecutive C2H2-type zinc fingers follow at residues 671 to 696, 714 to 736, 742 to 766, 771 to 795, and 801 to 825; these read YPCP…KAEH, EKCT…EQVH, YMCV…KQKH, YKCE…EAQH, and YTCN…LSMH. Residue Lys-839 forms a Glycyl lysine isopeptide (Lys-Gly) (interchain with G-Cter in SUMO2) linkage. The disordered stretch occupies residues 882 to 907; the sequence is TETAENLKENSDSNSSDQLSHSSSAS. Residues 893 to 907 show a composition bias toward low complexity; it reads DSNSSDQLSHSSSAS. Residues 954 to 979 form a C2H2-type 7 zinc finger; that stretch reads FTCGFDGCGSTYKNARGMQKHLRKVH. Positions 993 to 1028 are disordered; sequence LFPSLGNEHNQTTEKLDAEPKPCSDTNSDSPDEGLD. Residues 1003–1014 are compositionally biased toward basic and acidic residues; sequence QTTEKLDAEPKP. 2 C2H2-type zinc fingers span residues 1127–1152 and 1172–1195; these read FFCE…LKKH and FQCH…KNKH. The interval 1231–1290 is disordered; it reads LGGDPSSNSEKPHCHPKKDECSSETDLESSCEETESKTSDISSPIGSHREEQEGREGRGS. A compositionally biased stretch (basic and acidic residues) spans 1240-1251; that stretch reads EKPHCHPKKDEC. The segment covering 1252 to 1263 has biased composition (acidic residues); the sequence is SSETDLESSCEE. Over residues 1277 to 1289 the composition is skewed to basic and acidic residues; the sequence is SHREEQEGREGRG. 5 C2H2-type zinc fingers span residues 1310–1335, 1362–1387, 1407–1432, 1444–1469, and 1549–1574; these read FHCI…RTVH, FACK…SDSH, FSCN…MEQH, IHCD…YYRH, and YPCM…KRTH. Lys-1423 participates in a covalent cross-link: Glycyl lysine isopeptide (Lys-Gly) (interchain with G-Cter in SUMO2). Residues Lys-1599 and Lys-1611 each participate in a glycyl lysine isopeptide (Lys-Gly) (interchain with G-Cter in SUMO2) cross-link. Positions 1620–1654 are disordered; sequence SERTEHSHSPGDSSAPIQNTDCCHSSERDGGQKGC. Positions 1629 to 1642 are enriched in polar residues; it reads PGDSSAPIQNTDCC. Lys-1696 is covalently cross-linked (Glycyl lysine isopeptide (Lys-Gly) (interchain with G-Cter in SUMO2)). Residues 1725-1757 are disordered; that stretch reads ESETRQHSSGQENTVKNPTHVPKENFRKHSQPR. A compositionally biased stretch (polar residues) spans 1731–1741; the sequence is HSSGQENTVKN. A Glycyl lysine isopeptide (Lys-Gly) (interchain with G-Cter in SUMO2) cross-link involves residue Lys-1762. The tract at residues 1783-1807 is disordered; that stretch reads KEDDFDDWEPSEHLTLSNSSQSSND. The span at 1796-1807 shows a compositional bias: polar residues; sequence LTLSNSSQSSND.

Belongs to the krueppel C2H2-type zinc-finger protein family. Interacts with RIT1 and RIT2. In terms of tissue distribution, widely expressed in fetal and adult tissues.

Its subcellular location is the nucleus. Its function is as follows. May be involved in transcriptional regulation. In Homo sapiens (Human), this protein is Zinc finger protein Rlf (RLF).